Reading from the N-terminus, the 160-residue chain is Lipoprotein signal peptidase (160 aa).

4 helical membrane passes run 7 to 27, 39 to 59, 62 to 82, and 96 to 116; these read WFWLVAIIGLGLDQLTKYITV, LWPGVFHLTYVINTGAAFSFF, GAVWLRWLSLAVSLGLIFLGW, and GFILAGALGNGIDRFLFGYVV. Residues Asp117 and Asp133 contribute to the active site. A helical membrane pass occupies residues 126-146; the sequence is FPVFNLADTFINIGIFFLLLA.

The protein belongs to the peptidase A8 family.

The protein localises to the cell inner membrane. The catalysed reaction is Release of signal peptides from bacterial membrane prolipoproteins. Hydrolyzes -Xaa-Yaa-Zaa-|-(S,diacylglyceryl)Cys-, in which Xaa is hydrophobic (preferably Leu), and Yaa (Ala or Ser) and Zaa (Gly or Ala) have small, neutral side chains.. Its pathway is protein modification; lipoprotein biosynthesis (signal peptide cleavage). In terms of biological role, this protein specifically catalyzes the removal of signal peptides from prolipoproteins. This chain is Lipoprotein signal peptidase, found in Gloeothece citriformis (strain PCC 7424) (Cyanothece sp. (strain PCC 7424)).